Consider the following 160-residue polypeptide: Cytochrome b6-f complex subunit 4 (160 aa).

Helical transmembrane passes span 36-56, 95-115, and 131-151; these read LLYI…GLAV, LLGV…PFLE, and TVFL…TLPI.

This sequence belongs to the cytochrome b family. PetD subfamily. The 4 large subunits of the cytochrome b6-f complex are cytochrome b6, subunit IV (17 kDa polypeptide, petD), cytochrome f and the Rieske protein, while the 4 small subunits are petG, petL, petM and petN. The complex functions as a dimer.

The protein resides in the plastid. Its subcellular location is the chloroplast thylakoid membrane. In terms of biological role, component of the cytochrome b6-f complex, which mediates electron transfer between photosystem II (PSII) and photosystem I (PSI), cyclic electron flow around PSI, and state transitions. The protein is Cytochrome b6-f complex subunit 4 of Arabidopsis thaliana (Mouse-ear cress).